The chain runs to 262 residues: Protein N-terminal and lysine N-methyltransferase EFM7 (262 aa).

Residues Trp59, 86–88 (GAA), Asp108, Trp143, and Ser171 each bind S-adenosyl-L-methionine.

Belongs to the class I-like SAM-binding methyltransferase superfamily. EFM7 family.

It is found in the cytoplasm. In terms of biological role, S-adenosyl-L-methionine-dependent protein methyltransferase that trimethylates the N-terminal glycine 'Gly-2' of elongation factor 1-alpha, before also catalyzing the mono- and dimethylation of 'Lys-3'. This chain is Protein N-terminal and lysine N-methyltransferase EFM7, found in Candida albicans (strain SC5314 / ATCC MYA-2876) (Yeast).